Here is a 158-residue protein sequence, read N- to C-terminus: Ribosome maturation factor RimP (158 aa).

This sequence belongs to the RimP family.

Its subcellular location is the cytoplasm. Functionally, required for maturation of 30S ribosomal subunits. In Pseudomonas fluorescens (strain Pf0-1), this protein is Ribosome maturation factor RimP.